The following is a 155-amino-acid chain: Small ribosomal subunit protein uS7cz/uS7cy (155 aa).

The protein belongs to the universal ribosomal protein uS7 family. As to quaternary structure, part of the 30S ribosomal subunit.

The protein resides in the plastid. Functionally, one of the primary rRNA binding proteins, it binds directly to 16S rRNA where it nucleates assembly of the head domain of the 30S subunit. This chain is Small ribosomal subunit protein uS7cz/uS7cy (rps7-A), found in Epifagus virginiana (Beechdrops).